The following is a 360-amino-acid chain: Probable dual-specificity RNA methyltransferase RlmN (360 aa).

The Proton acceptor role is filled by Glu91. In terms of domain architecture, Radical SAM core spans 97 to 335 (QHYGQSVCVT…CVVRQEHGTD (239 aa)). Cysteines 104 and 340 form a disulfide. Residues Cys111, Cys115, and Cys118 each coordinate [4Fe-4S] cluster. S-adenosyl-L-methionine-binding positions include 163–164 (GE), Ser195, 218–220 (SLH), and Asn296. Cys340 (S-methylcysteine intermediate) is an active-site residue.

It belongs to the radical SAM superfamily. RlmN family. The cofactor is [4Fe-4S] cluster.

It localises to the cytoplasm. It catalyses the reaction adenosine(2503) in 23S rRNA + 2 reduced [2Fe-2S]-[ferredoxin] + 2 S-adenosyl-L-methionine = 2-methyladenosine(2503) in 23S rRNA + 5'-deoxyadenosine + L-methionine + 2 oxidized [2Fe-2S]-[ferredoxin] + S-adenosyl-L-homocysteine. The catalysed reaction is adenosine(37) in tRNA + 2 reduced [2Fe-2S]-[ferredoxin] + 2 S-adenosyl-L-methionine = 2-methyladenosine(37) in tRNA + 5'-deoxyadenosine + L-methionine + 2 oxidized [2Fe-2S]-[ferredoxin] + S-adenosyl-L-homocysteine. In terms of biological role, specifically methylates position 2 of adenine 2503 in 23S rRNA and position 2 of adenine 37 in tRNAs. This chain is Probable dual-specificity RNA methyltransferase RlmN, found in Streptococcus equi subsp. zooepidemicus (strain MGCS10565).